The sequence spans 88 residues: MANSKSAKKRALQSEKRRQHNASRSSMLRTYVKKVIAAINAGDHESATAAFVTAQPIVDRMATKGLIHKNKAARYKSRLNAKIKALAA.

Positions 1 to 21 are enriched in basic residues; the sequence is MANSKSAKKRALQSEKRRQHN. Residues 1-27 are disordered; it reads MANSKSAKKRALQSEKRRQHNASRSSM.

Belongs to the bacterial ribosomal protein bS20 family.

Functionally, binds directly to 16S ribosomal RNA. The chain is Small ribosomal subunit protein bS20 from Shewanella piezotolerans (strain WP3 / JCM 13877).